We begin with the raw amino-acid sequence, 255 residues long: Type III pantothenate kinase (255 aa).

ATP is bound at residue 6–13 (DIGNSNID). 107–110 (GADL) provides a ligand contact to substrate. The Proton acceptor role is filled by aspartate 109. Residue aspartate 129 coordinates K(+). ATP is bound at residue threonine 132. A substrate-binding site is contributed by threonine 183.

Belongs to the type III pantothenate kinase family. Homodimer. NH4(+) is required as a cofactor. It depends on K(+) as a cofactor.

It is found in the cytoplasm. It carries out the reaction (R)-pantothenate + ATP = (R)-4'-phosphopantothenate + ADP + H(+). Its pathway is cofactor biosynthesis; coenzyme A biosynthesis; CoA from (R)-pantothenate: step 1/5. In terms of biological role, catalyzes the phosphorylation of pantothenate (Pan), the first step in CoA biosynthesis. In Dictyoglomus turgidum (strain DSM 6724 / Z-1310), this protein is Type III pantothenate kinase.